Here is a 78-residue protein sequence, read N- to C-terminus: DNA gyrase inhibitor YacG (78 aa).

Residues Cys7, Cys10, Cys26, and Cys30 each coordinate Zn(2+).

The protein belongs to the DNA gyrase inhibitor YacG family. As to quaternary structure, interacts with GyrB. The cofactor is Zn(2+).

Inhibits all the catalytic activities of DNA gyrase by preventing its interaction with DNA. Acts by binding directly to the C-terminal domain of GyrB, which probably disrupts DNA binding by the gyrase. This Shewanella piezotolerans (strain WP3 / JCM 13877) protein is DNA gyrase inhibitor YacG.